A 134-amino-acid polypeptide reads, in one-letter code: MKAFSPVRSVRKNSLSDHGLGISRSKTPVDDPMSLLYNMNDCYSKLKELVPSIPQNKKVSKMEILQHVIDYILDLQIALDSHPTIVSLHHQRPGQSQASRTPLTTLNTDISILSLQASEFPSELMSNDSKALCG.

The segment at 1–24 (MKAFSPVRSVRKNSLSDHGLGISR) is disordered. Residues Ser14 and Ser25 each carry the phosphoserine modification. The bHLH domain maps to 23–75 (SRSKTPVDDPMSLLYNMNDCYSKLKELVPSIPQNKKVSKMEILQHVIDYILDL). Residues 106–115 (LNTDISILSL) carry the Nuclear export signal motif.

As to quaternary structure, interacts with GATA4 and NKX2-5. Interacts with NR0B2. Interacts with CLOCK and BMAL1. Interacts with IFI204. Interacts with NEDD9/HEF1. Interacts with ASB4; this interaction promotes ID2 proteasomal degradation. Ubiquitinated in a ASB4-depedent manner, leading to proteasomal degradation. In terms of processing, phosphorylated in vitro by CDK1, PKA and PKC.

The protein localises to the cytoplasm. The protein resides in the nucleus. Functionally, transcriptional regulator (lacking a basic DNA binding domain) which negatively regulates the basic helix-loop-helix (bHLH) transcription factors by forming heterodimers and inhibiting their DNA binding and transcriptional activity. Implicated in regulating a variety of cellular processes, including cellular growth, senescence, differentiation, apoptosis, angiogenesis, and neoplastic transformation. Inhibits skeletal muscle and cardiac myocyte differentiation. Regulates the circadian clock by repressing the transcriptional activator activity of the CLOCK-BMAL1 heterodimer. Restricts the CLOCK and BMAL1 localization to the cytoplasm. Plays a role in both the input and output pathways of the circadian clock: in the input component, is involved in modulating the magnitude of photic entrainment and in the output component, contributes to the regulation of a variety of liver clock-controlled genes involved in lipid metabolism. This is DNA-binding protein inhibitor ID-2 (ID2) from Bos taurus (Bovine).